Reading from the N-terminus, the 215-residue chain is Extracellular small neutral protease (215 aa).

Residues 1 to 30 (MRMTRAASALAGLGLAVAAALGSVAPASAA) form the signal peptide. Thr152 lines the Ca(2+) pocket. A Zn(2+)-binding site is contributed by His157. Glu158 is a catalytic residue. Residues His161 and Asp167 each contribute to the Zn(2+) site. The cysteines at positions 173 and 186 are disulfide-linked.

Belongs to the peptidase M7 family. Zn(2+) is required as a cofactor.

The protein localises to the secreted. It carries out the reaction Hydrolyzes proteins with a preference for Tyr or Phe in the P1' position. Has no action on amino-acid p-nitroanilides.. This Streptomyces coelicolor protein is Extracellular small neutral protease (snpA).